Reading from the N-terminus, the 179-residue chain is MEVKTIMLLFQILAISTLKQGSAHVPDGYVEENVALRGRATQSAQLRGEHAALAHASNAIDGNRDSNYHHGSCTHTEGANPWWRVDLLQVYTIASVTITNRGDCCGERISGARILIGNSLENNGINNPQCSVIGSLATGETRTFHCPQPMIGRYVTVYLPKIESLQLCEVEVNALLPVN.

A signal peptide spans Met-1–Ala-23. The F5/8 type C-like stretch occupies residues Glu-31–Asn-179. Positions 58, 61, 63, and 72 each coordinate Ca(2+). Disulfide bonds link Cys-73-Cys-168, Cys-104-Cys-105, and Cys-130-Cys-146. Alpha-L-fucose contacts are provided by His-75 and Arg-101. The Cell attachment site signature appears at Arg-101–Asp-103. Residue Arg-108 coordinates alpha-L-fucose. Residues Cys-168 and Glu-169 each contribute to the Ca(2+) site.

Belongs to the fucolectin family. In terms of assembly, homotrimer. In terms of tissue distribution, gill mucous cells.

Its subcellular location is the secreted. In terms of biological role, acts as a defensive agent. Recognizes blood group fucosylated oligosaccharides including A, B, H and Lewis B-type antigens. Does not recognize Lewis A antigen and has low affinity for monovalent haptens. The protein is Fucolectin-4 of Anguilla japonica (Japanese eel).